The following is a 77-amino-acid chain: Oxyopinin-4a (77 aa).

Residues 1–20 (MKISQVFIFVFLLMISVAWA) form the signal peptide. Residues 21 to 47 (NEAYEEESNYLSERFDADVEEITPEFR) constitute a propeptide that is removed on maturation. C51 and C57 are disulfide-bonded.

As to expression, expressed by the venom gland.

Its subcellular location is the secreted. It is found in the target cell membrane. Disrupts cell membranes through the formation of pores. Has antibacterial activity against Gram-positive bacteria S.aureus (MIC=10 uM) and B.subtilis (MIC=0.5 uM) as well as Gram-negative bacteria P.fluorescens (MIC=1 uM) and E.coli (MIC=0.5 uM). Has hemolytic activity against human erythrocytes (EC(50)=7 uM). In Oxyopes takobius (Lynx spider), this protein is Oxyopinin-4a.